Reading from the N-terminus, the 72-residue chain is Large ribosomal subunit protein bL31 (72 aa).

Cys16, Cys18, Cys36, and Cys39 together coordinate Zn(2+).

It belongs to the bacterial ribosomal protein bL31 family. Type A subfamily. As to quaternary structure, part of the 50S ribosomal subunit. Zn(2+) is required as a cofactor.

Functionally, binds the 23S rRNA. This chain is Large ribosomal subunit protein bL31, found in Geobacter sp. (strain M21).